We begin with the raw amino-acid sequence, 295 residues long: Aspartate carbamoyltransferase catalytic subunit (295 aa).

Carbamoyl phosphate-binding residues include Arg-49 and Thr-50. Lys-77 provides a ligand contact to L-aspartate. Carbamoyl phosphate contacts are provided by Arg-99, His-127, and Gln-130. Residues Arg-161 and Arg-212 each coordinate L-aspartate. Residues Gly-251 and Pro-252 each coordinate carbamoyl phosphate.

It belongs to the aspartate/ornithine carbamoyltransferase superfamily. ATCase family. In terms of assembly, heterododecamer (2C3:3R2) of six catalytic PyrB chains organized as two trimers (C3), and six regulatory PyrI chains organized as three dimers (R2).

It catalyses the reaction carbamoyl phosphate + L-aspartate = N-carbamoyl-L-aspartate + phosphate + H(+). It participates in pyrimidine metabolism; UMP biosynthesis via de novo pathway; (S)-dihydroorotate from bicarbonate: step 2/3. In terms of biological role, catalyzes the condensation of carbamoyl phosphate and aspartate to form carbamoyl aspartate and inorganic phosphate, the committed step in the de novo pyrimidine nucleotide biosynthesis pathway. The protein is Aspartate carbamoyltransferase catalytic subunit of Campylobacter jejuni subsp. jejuni serotype O:2 (strain ATCC 700819 / NCTC 11168).